The following is a 530-amino-acid chain: MLLAALYCLLWSFRTSAGHFPRACASSKSLTEKECCPPWAGDGSPCGRLSGRGSCQDVILSTAPLGPQFPFTGVDDRESWPSIFYNRTCQCFSNFMGFNCGSCKFGFRGPRCTERRLLVRRNIFDLSVPEKNKFLAYLTLAKHTTSPDYVIPTGTYGQMNHGTTPLFNDVSVYDLFVWMHYYVSRDTLLGDSEVWRDIDFAHEAPGFLPWHRLFLLLWEQEIQKLTGDENFTIPYWDWRDAENCDVCTDEYMGGRNPANPNLLSPASFFSSWQIVCSRLEEYNSRQALCNGTSEGPLLRNPGNHDKARTPRLPSSADVEFCLSLTQYESGSMDKAANFSFRNTLEGFADPVTGIADASQSSMHNALHIYMNGTMSQVPGSANDPIFLLHHAFVDSIFEQWLRKYHPLQDVYPEANAPIGHNRESYMVPFIPLYRNGDFFISSKDXGYDYSYLQDSEPDIFQDYIKPYLEQAQRIWPWLIGAAVVGSVLTAVLGGLTSLLCRRKRNQLPEEKQPLLMEKEDYHNLMYQSHL.

The signal sequence occupies residues 1 to 17; the sequence is MLLAALYCLLWSFRTSA. Residues 19–473 are Lumenal, melanosome-facing; the sequence is HFPRACASSK…IKPYLEQAQR (455 aa). N86 is a glycosylation site (N-linked (GlcNAc...) asparagine). Residues H180, H202, and H211 each contribute to the Cu cation site. Residues N230, N290, and N337 are each glycosylated (N-linked (GlcNAc...) asparagine). H363 and H367 together coordinate Cu cation. A glycan (N-linked (GlcNAc...) asparagine) is linked at N371. Position 390 (H390) interacts with Cu cation. The chain crosses the membrane as a helical span at residues 474–494; the sequence is IWPWLIGAAVVGSVLTAVLGG. Residues 495 to 530 are Cytoplasmic-facing; it reads LTSLLCRRKRNQLPEEKQPLLMEKEDYHNLMYQSHL.

Belongs to the tyrosinase family. Forms an OPN3-dependent complex with DCT in response to blue light in melanocytes. Cu(2+) is required as a cofactor. In terms of processing, glycosylated.

It is found in the melanosome membrane. Its subcellular location is the melanosome. The catalysed reaction is 2 L-dopa + O2 = 2 L-dopaquinone + 2 H2O. It catalyses the reaction L-tyrosine + O2 = L-dopaquinone + H2O. It carries out the reaction 2 5,6-dihydroxyindole-2-carboxylate + O2 = 2 indole-5,6-quinone-2-carboxylate + 2 H2O. In terms of biological role, this is a copper-containing oxidase that functions in the formation of pigments such as melanins and other polyphenolic compounds. Catalyzes the initial and rate limiting step in the cascade of reactions leading to melanin production from tyrosine. In addition to hydroxylating tyrosine to DOPA (3,4-dihydroxyphenylalanine), also catalyzes the oxidation of DOPA to DOPA-quinone, and possibly the oxidation of DHI (5,6-dihydroxyindole) to indole-5,6 quinone. The sequence is that of Tyrosinase (TYR) from Bos taurus (Bovine).